The following is a 1283-amino-acid chain: Oxysterol-binding protein homolog 2 (1283 aa).

The residue at position 2 (serine 2) is an N-acetylserine. Position 7 is a phosphoserine (serine 7). ANK repeat units lie at residues 106–134 (NGNT…SIND) and 206–235 (TGTT…EATV). The region spanning 289–386 (PPTYKGFLKK…WVNAIQSAIR (98 aa)) is the PH domain. Residues serine 422, serine 445, serine 451, serine 455, serine 458, serine 459, and serine 486 each carry the phosphoserine modification. At threonine 488 the chain carries Phosphothreonine. Polar residues-rich tracts occupy residues 504-518 (SNTL…SGSG) and 530-551 (ANLS…NNYI). Disordered stretches follow at residues 504–571 (SNTL…LGIN) and 702–721 (TAGN…DTTA). Serine 512 and serine 515 each carry phosphoserine. Over residues 554–568 (FEGDEANSDDEEEDL) the composition is skewed to acidic residues. Residues 707–716 (ESLENDKEQE) show a composition bias toward basic and acidic residues. Residue serine 717 is modified to Phosphoserine. The FFAT signature appears at 745 to 751 (EFYDAAE). The segment at 767-834 (STAAAPKHAP…SLKNFKAEDK (68 aa)) is disordered. Threonine 783 carries the phosphothreonine modification. Serine 787 carries the phosphoserine modification. Basic and acidic residues-rich tracts occupy residues 791–810 (QDEK…KFEK) and 818–834 (DEPK…AEDK). Residues serine 825 and serine 1151 each carry the phosphoserine modification. Positions 897–1268 (SLWAVLKSMV…KYWRYTGKYW (372 aa)) are OSBP-related domain (ORD).

The protein belongs to the OSBP family. As to quaternary structure, interacts with SCS2.

It is found in the cell membrane. The protein resides in the endoplasmic reticulum membrane. In terms of biological role, lipid transport protein (LTP) involved in non-vesicular transfer of lipids between membranes. Functions in phosphoinositide-coupled directional transport of various lipids by carrying the lipid molecule in a hydrophobic pocket and transferring it between membranes through the cytosol. Involved in maintenance of intracellular sterol distribution and homeostasis. Binds and transports sterol. Plays a role in the positive regulation of vesicular transport of ceramide from the ER to the Golgi, negatively regulating COPII-mediated ER export of cargos. The sequence is that of Oxysterol-binding protein homolog 2 from Saccharomyces cerevisiae (strain ATCC 204508 / S288c) (Baker's yeast).